Here is a 61-residue protein sequence, read N- to C-terminus: Large ribosomal subunit protein eL37 (61 aa).

Zn(2+)-binding residues include Cys19, Cys22, Cys34, and Cys37. The C4-type zinc-finger motif lies at 19-37 (CRRCGRNAYNVSKHYCAAC).

Belongs to the eukaryotic ribosomal protein eL37 family. Zn(2+) serves as cofactor.

Its function is as follows. Binds to the 23S rRNA. The polypeptide is Large ribosomal subunit protein eL37 (Saccharolobus islandicus (strain Y.N.15.51 / Yellowstone #2) (Sulfolobus islandicus)).